The sequence spans 792 residues: Receptor-like protein 54 (792 aa).

Residues 1–21 (MKSNLAVFFITCFFCCVFVTS) form the signal peptide. Over 22 to 758 (DSVYTLPFPF…PKQEHALNWK (737 aa)) the chain is Extracellular. 2 N-linked (GlcNAc...) asparagine glycosylation sites follow: Asn68 and Asn107. LRR repeat units follow at residues 114–137 (QHLR…GFGR), 139–162 (TYLE…ISNL), 163–187 (SRLT…SLTL), 189–209 (ENID…LFTM), 211–233 (FLVS…NYSA), 235–258 (SKLL…ISKL), 259–282 (ANLI…FLLF), 283–302 (KSLV…GTGS), 303–324 (ENLT…FIKD), 325–349 (LQRL…LWTL), 351–374 (SMLH…IILN), and 375–399 (SSIS…PYVN). Asn161 carries an N-linked (GlcNAc...) asparagine glycan. Residue Asn230 is glycosylated (N-linked (GlcNAc...) asparagine). Residues Asn304 and Asn314 are each glycosylated (N-linked (GlcNAc...) asparagine). N-linked (GlcNAc...) asparagine glycosylation is found at Asn356 and Asn374. Residues 400–418 (IMAASNNYFTGGIPLIFCK) form an LRR 13; degenerate repeat. LRR repeat units lie at residues 419–443 (RYRL…LTNV), 444–470 (SLGL…RLVL), 472–489 (DVGH…LVNC), and 490–515 (TTLK…ALTR). N-linked (GlcNAc...) asparagine glycans are attached at residues Asn431, Asn442, Asn454, Asn488, and Asn503. The stretch at 516–536 (LEIIVLRSNRFHGPISSPEVS) is one LRR 18; degenerate repeat. LRR repeat units follow at residues 539–563 (FTAL…YFAN), 614–637 (DTYT…IGDL), 638–661 (KSLI…LAKL), 662–685 (KQLE…LREL), and 687–709 (FLGY…TQVG). N-linked (GlcNAc...) asparagine glycans are attached at residues Asn553 and Asn563. Residue Asn647 is glycosylated (N-linked (GlcNAc...) asparagine). A glycan (N-linked (GlcNAc...) asparagine) is linked at Asn692. The helical transmembrane segment at 759 to 779 (AAAIGYGPGVLFGLAIGQAFA) threads the bilayer. Residues 780 to 792 (RYKPVLFYKLFRL) are Cytoplasmic-facing.

This sequence belongs to the RLP family.

It is found in the cell membrane. This is Receptor-like protein 54 from Arabidopsis thaliana (Mouse-ear cress).